The following is a 577-amino-acid chain: MLFSKLFAPTLKEPPKDAVLKSHKHLAQAGYIYQVGSGIYNFLPLAKKVLDKIENITHKRMQEHGAQNILMSFVVLASLWEKSGRLDKYGKELLVFKDRKDNDFVLSPTLEENITEIAANFIKSYKQLPVHLYQIHTKFRDEIRPRFGLVRAREFIMKDGYSFHEDAESLDKEFLNTQSAYKEILSDLGLDFRIVEADSGAIGGSKSREFVVLTECGEDTIVVCQNCDYAANIEIAKRSKRPEPLNVPKAQLAKFPTPNTTSAQSVAEFFKTEPYFVLKALVRKVIHKDKETLACFFVRGDDNLEEVKALNALNIIGANALELREANEEDLNKAGLIAGFIGPYGLKKHVSYIIFDEDLKESDCLIVGANEKDFHAVGVDLKGFENLVYADIVQVKESDRCPNCQGELKYHKSLEVGHIFKLGQGYAKSLKASFLDKNGKEQFFEMGCYGIGISRLLSAILEQKSDDLGCVWTKNTAPFDVVIVVSNLKDEAQKKLAFEVYERLLQKGVDALLDDRDARFGAKMRDFELIGERLALIVGKQTLESKEFECIKRANLEKQTIKDIELEEKILEMLASE.

This sequence belongs to the class-II aminoacyl-tRNA synthetase family. ProS type 1 subfamily. Homodimer.

Its subcellular location is the cytoplasm. The enzyme catalyses tRNA(Pro) + L-proline + ATP = L-prolyl-tRNA(Pro) + AMP + diphosphate. Its function is as follows. Catalyzes the attachment of proline to tRNA(Pro) in a two-step reaction: proline is first activated by ATP to form Pro-AMP and then transferred to the acceptor end of tRNA(Pro). As ProRS can inadvertently accommodate and process non-cognate amino acids such as alanine and cysteine, to avoid such errors it has two additional distinct editing activities against alanine. One activity is designated as 'pretransfer' editing and involves the tRNA(Pro)-independent hydrolysis of activated Ala-AMP. The other activity is designated 'posttransfer' editing and involves deacylation of mischarged Ala-tRNA(Pro). The misacylated Cys-tRNA(Pro) is not edited by ProRS. This Helicobacter pylori (strain P12) protein is Proline--tRNA ligase.